The primary structure comprises 237 residues: RING finger protein vilya (237 aa).

The RING-type zinc-finger motif lies at 21–69 (CNSCCALFCDKKHTFFLLACHHVFCERCVKVSAGRTPSDAPIFECSTCR). The tract at residues 172–237 (MHRMAQAYRS…IHPPNNSFDL (66 aa)) is disordered. Over residues 180–195 (RSRSLTSQSSSSAQRS) the composition is skewed to low complexity. The segment covering 221 to 237 (RQQITSFIHPPNNSFDL) has biased composition (polar residues).

As to quaternary structure, may interact with itself and with narya and nenya through their RING-type zinc fingers. Expressed in nurse cell and pro-oocytes (at protein level).

It is found in the chromosome. Required for the formation of DNA double-strand breaks during meiosis together with narya and nenya. The chain is RING finger protein vilya from Drosophila melanogaster (Fruit fly).